A 281-amino-acid chain; its full sequence is MKFVGAHVSAAGGVDQAVIRAHELEATAFALFTKNQRQWRAAPLAEDVIEKFKQACEQYGYTSAQILPHDSYLINLGHPVTEALEKSREAFIDEMLRCQQLGLSLLNFHPGSHLLQIDEGKCLARIAESINIALDATEGVTAVIENTAGQGSNLGFKFEHLAAIIDGVEDKSRVGVCIDTCHAFAAGYDLRTEADCQHTFGALGDIVGFEYLRGMHLNDAKSEFNSRVDRHHSLGEGNIGKTVFSYIMHDPRFDNIPLILETVNPDIWAEEIAWLKSQAEI.

9 residues coordinate Zn(2+): His69, His109, Glu145, Asp179, His182, His216, Asp229, His231, and Glu261.

It belongs to the AP endonuclease 2 family. It depends on Zn(2+) as a cofactor.

It catalyses the reaction Endonucleolytic cleavage to 5'-phosphooligonucleotide end-products.. Endonuclease IV plays a role in DNA repair. It cleaves phosphodiester bonds at apurinic or apyrimidinic (AP) sites, generating a 3'-hydroxyl group and a 5'-terminal sugar phosphate. The polypeptide is Probable endonuclease 4 (Yersinia enterocolitica serotype O:8 / biotype 1B (strain NCTC 13174 / 8081)).